Here is a 260-residue protein sequence, read N- to C-terminus: NH(3)-dependent NAD(+) synthetase (260 aa).

Position 31-38 (31-38) interacts with ATP; it reads GLSGGLDS. Position 37 (Asp37) interacts with Mg(2+). Arg112 provides a ligand contact to deamido-NAD(+). ATP is bound at residue Thr132. A Mg(2+)-binding site is contributed by Glu137. ATP contacts are provided by Lys161 and Ser183.

The protein belongs to the NAD synthetase family. In terms of assembly, homodimer.

It carries out the reaction deamido-NAD(+) + NH4(+) + ATP = AMP + diphosphate + NAD(+) + H(+). The protein operates within cofactor biosynthesis; NAD(+) biosynthesis; NAD(+) from deamido-NAD(+) (ammonia route): step 1/1. In terms of biological role, catalyzes the ATP-dependent amidation of deamido-NAD to form NAD. Uses ammonia as a nitrogen source. This chain is NH(3)-dependent NAD(+) synthetase, found in Helicobacter pylori (strain P12).